Reading from the N-terminus, the 953-residue chain is Isoleucine--tRNA ligase (953 aa).

A 'HIGH' region motif is present at residues 57–67; the sequence is PYANGDIHIGH. Residue glutamate 582 coordinates L-isoleucyl-5'-AMP. Positions 623–627 match the 'KMSKS' region motif; it reads KMSKS. Lysine 626 provides a ligand contact to ATP. Zn(2+) contacts are provided by cysteine 916, cysteine 919, cysteine 936, and cysteine 939.

It belongs to the class-I aminoacyl-tRNA synthetase family. IleS type 1 subfamily. In terms of assembly, monomer. Requires Zn(2+) as cofactor.

The protein localises to the cytoplasm. It carries out the reaction tRNA(Ile) + L-isoleucine + ATP = L-isoleucyl-tRNA(Ile) + AMP + diphosphate. In terms of biological role, catalyzes the attachment of isoleucine to tRNA(Ile). As IleRS can inadvertently accommodate and process structurally similar amino acids such as valine, to avoid such errors it has two additional distinct tRNA(Ile)-dependent editing activities. One activity is designated as 'pretransfer' editing and involves the hydrolysis of activated Val-AMP. The other activity is designated 'posttransfer' editing and involves deacylation of mischarged Val-tRNA(Ile). This chain is Isoleucine--tRNA ligase, found in Bordetella bronchiseptica (strain ATCC BAA-588 / NCTC 13252 / RB50) (Alcaligenes bronchisepticus).